We begin with the raw amino-acid sequence, 787 residues long: Endonuclease MutS2 (787 aa).

ATP is bound at residue 334-341; sequence GPNTGGKT. The disordered stretch occupies residues 685–709; the sequence is KAQDPAKSAKQPRASVKRSGSSGMS. Residues 712–787 enclose the Smr domain; the sequence is LDLRGHRYEE…GDGSTVVHFK (76 aa).

This sequence belongs to the DNA mismatch repair MutS family. MutS2 subfamily. Homodimer. Binds to stalled ribosomes, contacting rRNA.

Endonuclease that is involved in the suppression of homologous recombination and thus may have a key role in the control of bacterial genetic diversity. Functionally, acts as a ribosome collision sensor, splitting the ribosome into its 2 subunits. Detects stalled/collided 70S ribosomes which it binds and splits by an ATP-hydrolysis driven conformational change. Acts upstream of the ribosome quality control system (RQC), a ribosome-associated complex that mediates the extraction of incompletely synthesized nascent chains from stalled ribosomes and their subsequent degradation. Probably generates substrates for RQC. In Levilactobacillus brevis (strain ATCC 367 / BCRC 12310 / CIP 105137 / JCM 1170 / LMG 11437 / NCIMB 947 / NCTC 947) (Lactobacillus brevis), this protein is Endonuclease MutS2.